The chain runs to 554 residues: Glucose-6-phosphate isomerase (554 aa).

Glutamate 359 (proton donor) is an active-site residue. Residues histidine 390 and lysine 518 contribute to the active site.

Belongs to the GPI family.

It is found in the cytoplasm. The catalysed reaction is alpha-D-glucose 6-phosphate = beta-D-fructose 6-phosphate. It participates in carbohydrate biosynthesis; gluconeogenesis. It functions in the pathway carbohydrate degradation; glycolysis; D-glyceraldehyde 3-phosphate and glycerone phosphate from D-glucose: step 2/4. Functionally, catalyzes the reversible isomerization of glucose-6-phosphate to fructose-6-phosphate. This Pseudomonas fluorescens protein is Glucose-6-phosphate isomerase.